Here is an 803-residue protein sequence, read N- to C-terminus: Phenylalanine--tRNA ligase beta subunit (803 aa).

The region spanning 40-153 (ASLDRRIVVG…SSWEIGKPFA (114 aa)) is the tRNA-binding domain. In terms of domain architecture, B5 spans 400-476 (ADLQLLALRP…RLYGYNAIES (77 aa)). Residues aspartate 454, aspartate 460, glutamate 463, and glutamate 464 each contribute to the Mg(2+) site. Residues 709–801 (SRFPVVERDI…AESKLGAVIR (93 aa)) form the FDX-ACB domain.

The protein belongs to the phenylalanyl-tRNA synthetase beta subunit family. Type 1 subfamily. In terms of assembly, tetramer of two alpha and two beta subunits. The cofactor is Mg(2+).

The protein localises to the cytoplasm. The enzyme catalyses tRNA(Phe) + L-phenylalanine + ATP = L-phenylalanyl-tRNA(Phe) + AMP + diphosphate + H(+). The chain is Phenylalanine--tRNA ligase beta subunit from Chlorobium chlorochromatii (strain CaD3).